Here is a 465-residue protein sequence, read N- to C-terminus: Transcriptional protein swt1 (465 aa).

In terms of domain architecture, PINc spans 70 to 190; it reads GLFVLDTNFL…LLSDDKNLSI (121 aa).

This sequence belongs to the SWT1 family.

Its subcellular location is the cytoplasm. The protein localises to the nucleus. Functionally, involved in transcription. The protein is Transcriptional protein swt1 of Schizosaccharomyces pombe (strain 972 / ATCC 24843) (Fission yeast).